We begin with the raw amino-acid sequence, 487 residues long: Sodium-coupled neutral amino acid symporter 1 (487 aa).

Over 1–74 (MMHFKSGLEL…EYIPGTTSLG (74 aa)) the chain is Cytoplasmic. A Phosphoserine modification is found at Ser6. A Phosphothreonine modification is found at Thr11. A phosphoserine mark is found at Ser25, Ser28, Ser49, and Ser52. Thr54 carries the phosphothreonine modification. A Phosphoserine modification is found at Ser56. A helical transmembrane segment spans residues 75 to 97 (MSVFNLSNAIMGSGILGLAFALA). Residues 98-112 (NTGILLFLVLLTSVT) lie on the Extracellular side of the membrane. The chain crosses the membrane as a helical span at residues 113–133 (LLSIYSINLLLICSKETGCMV). Over 134–147 (YEKLGEQVFGTTGK) the chain is Cytoplasmic. Residues 148 to 168 (FVIFGATSLQNTGAMLSYLFI) traverse the membrane as a helical segment. The Extracellular portion of the chain corresponds to 169-188 (VKNELPSAIKFLMGKEETFS). The chain crosses the membrane as a helical span at residues 189-211 (AWYVDGRVLVVIVTFGIILPLCL). Over 212 to 216 (LKNLG) the chain is Cytoplasmic. A helical transmembrane segment spans residues 217 to 237 (YLGYTSGFSLSCMVFFLIVVI). Residues 238–275 (YKKFQIPCIVPELNSTISANSTNADTCTPKYVTLNSKT) are Extracellular-facing. A disulfide bridge connects residues Cys245 and Cys264. 2 N-linked (GlcNAc...) asparagine glycosylation sites follow: Asn251 and Asn257. A helical membrane pass occupies residues 276–296 (VYALPTIAFAFVCHPSVLPIY). Residues 297-312 (SELKDRSQKKMQMVSN) are Cytoplasmic-facing. The helical transmembrane segment at 313-333 (ISFFAMFVMYFLTAIFGYLTF) threads the bilayer. The Extracellular portion of the chain corresponds to 334–350 (YDNVQSDLLHKYQGKDD). Residues 351-371 (ILILTVRLAVIVAVILTVPVL) form a helical membrane-spanning segment. Topologically, residues 372–393 (FFTVRSSLFELAKKTKFNLCRH) are cytoplasmic. Residues 394–414 (TVVTCILLVVINLLVISIPSM) traverse the membrane as a helical segment. Residues 415-416 (KD) are Extracellular-facing. Residues 417-437 (IFGVVGVTSANMLIFILPSSL) form a helical membrane-spanning segment. Residues 438–452 (YLKITDQDGDKGTQR) lie on the Cytoplasmic side of the membrane. Residues 453–473 (IWAALFLGLGVLFSLVSIPLV) traverse the membrane as a helical segment. Over 474–487 (IYDWACSSSSDEGH) the chain is Extracellular.

This sequence belongs to the amino acid/polyamine transporter 2 family. Post-translationally, N-glycosylation plays an important role in the L-glutamine transport.

The protein resides in the cell membrane. The enzyme catalyses L-glutamine(in) + Na(+)(in) = L-glutamine(out) + Na(+)(out). It catalyses the reaction L-alanine(in) + Na(+)(in) = L-alanine(out) + Na(+)(out). The catalysed reaction is L-asparagine(in) + Na(+)(in) = L-asparagine(out) + Na(+)(out). It carries out the reaction L-histidine(in) + Na(+)(in) = L-histidine(out) + Na(+)(out). The enzyme catalyses L-serine(in) + Na(+)(in) = L-serine(out) + Na(+)(out). It catalyses the reaction L-cysteine(in) + Na(+)(in) = L-cysteine(out) + Na(+)(out). The catalysed reaction is L-methionine(in) + Na(+)(in) = L-methionine(out) + Na(+)(out). It carries out the reaction glycine(in) + Na(+)(in) = glycine(out) + Na(+)(out). The enzyme catalyses L-threonine(in) + Na(+)(in) = L-threonine(out) + Na(+)(out). It catalyses the reaction L-proline(in) + Na(+)(in) = L-proline(out) + Na(+)(out). Its activity is regulated as follows. Inhibited by alpha-(methylamino)isobutyric acid (MeAIB). Inhibited by lithium, potassium, choline ions, N-methylglucamine. The pH dependence has an allosteric effect on the transport. Symporter that cotransports short-chain neutral amino acids and sodium ions from the extraccellular to the intracellular side of the cell membrane. The transport is elctrogenic, pH dependent and driven by the Na(+) electrochemical gradient. Participates in the astroglia-derived glutamine transport into GABAergic interneurons for neurotransmitter GABA de novo synthesis. May also contributes to amino acid transport in placental trophoblast. Regulates synaptic plasticity. The sequence is that of Sodium-coupled neutral amino acid symporter 1 from Pongo abelii (Sumatran orangutan).